Consider the following 70-residue polypeptide: Large ribosomal subunit protein bL31 (70 aa).

4 residues coordinate Zn(2+): cysteine 16, cysteine 18, cysteine 37, and cysteine 40.

This sequence belongs to the bacterial ribosomal protein bL31 family. Type A subfamily. As to quaternary structure, part of the 50S ribosomal subunit. It depends on Zn(2+) as a cofactor.

In terms of biological role, binds the 23S rRNA. The protein is Large ribosomal subunit protein bL31 of Cronobacter sakazakii (strain ATCC BAA-894) (Enterobacter sakazakii).